We begin with the raw amino-acid sequence, 513 residues long: ATP synthase subunit alpha (513 aa).

ATP is bound at residue 169-176; that stretch reads GDRQTGKT.

The protein belongs to the ATPase alpha/beta chains family. In terms of assembly, F-type ATPases have 2 components, CF(1) - the catalytic core - and CF(0) - the membrane proton channel. CF(1) has five subunits: alpha(3), beta(3), gamma(1), delta(1), epsilon(1). CF(0) has three main subunits: a(1), b(2) and c(9-12). The alpha and beta chains form an alternating ring which encloses part of the gamma chain. CF(1) is attached to CF(0) by a central stalk formed by the gamma and epsilon chains, while a peripheral stalk is formed by the delta and b chains.

Its subcellular location is the cell inner membrane. It carries out the reaction ATP + H2O + 4 H(+)(in) = ADP + phosphate + 5 H(+)(out). Produces ATP from ADP in the presence of a proton gradient across the membrane. The alpha chain is a regulatory subunit. This chain is ATP synthase subunit alpha, found in Citrobacter koseri (strain ATCC BAA-895 / CDC 4225-83 / SGSC4696).